The chain runs to 132 residues: ATP synthase epsilon chain (132 aa).

Belongs to the ATPase epsilon chain family. In terms of assembly, F-type ATPases have 2 components, CF(1) - the catalytic core - and CF(0) - the membrane proton channel. CF(1) has five subunits: alpha(3), beta(3), gamma(1), delta(1), epsilon(1). CF(0) has three main subunits: a, b and c.

It is found in the cell membrane. Produces ATP from ADP in the presence of a proton gradient across the membrane. The sequence is that of ATP synthase epsilon chain from Bacillus velezensis (strain DSM 23117 / BGSC 10A6 / LMG 26770 / FZB42) (Bacillus amyloliquefaciens subsp. plantarum).